The primary structure comprises 506 residues: Cysteine protease 1 (506 aa).

Positions 1–21 are disordered; the sequence is MTSSRPSGRDSTGWQETVSNT. Cysteine 226 serves as the catalytic Nucleophile. Active-site residues include aspartate 399 and histidine 401.

It belongs to the peptidase C54 family.

Its subcellular location is the cytoplasm. It is found in the nucleus. It localises to the preautophagosomal structure. It catalyses the reaction [protein]-C-terminal L-amino acid-glycyl-phosphatidylethanolamide + H2O = [protein]-C-terminal L-amino acid-glycine + a 1,2-diacyl-sn-glycero-3-phosphoethanolamine. In terms of biological role, cysteine protease that plays a key role in cytoplasm to vacuole transport (Cvt) and autophagy by mediating both proteolytic activation and delipidation of ATG8. Required for selective autophagic degradation of the nucleus (nucleophagy) as well as for mitophagy which contributes to regulate mitochondrial quantity and quality by eliminating the mitochondria to a basal level to fulfill cellular energy requirements and preventing excess ROS production. The protease activity is required for proteolytic activation of ATG8: cleaves the C-terminal amino acid of ATG8 to reveal a C-terminal glycine. ATG8 ubiquitin-like activity requires the exposure of the glycine at the C-terminus for its conjugation to phosphatidylethanolamine (PE) and its insertion to membranes, which is necessary for autophagy. The ATG8-PE conjugate mediates tethering between adjacent membranes and stimulates membrane hemifusion, leading to expansion of the autophagosomal membrane during autophagy. In addition to the protease activity, also catalyzes deconjugation of PE-conjugated forms of ATG8 during macroautophagy: ATG8 delipidation is required to release the protein from membranes, which facilitates multiple events during macroautophagy, and especially for efficient autophagosome biogenesis, the assembly of ATG9-containing tubulovesicular clusters into phagophores/autophagosomes, and for the disassembly of PAS-associated ATG components. ATG8 delipidation by ATG4 also recycles ATG8-PE generated on inappropriate membranes to maintain a reservoir of unlipidated ATG8 that is required for autophagosome formation at the PAS. The sequence is that of Cysteine protease 1 (cpr-1) from Neurospora crassa (strain ATCC 24698 / 74-OR23-1A / CBS 708.71 / DSM 1257 / FGSC 987).